Reading from the N-terminus, the 330-residue chain is Ketol-acid reductoisomerase (NADP(+)) (330 aa).

Residues 2 to 182 (ARLYYDTDAN…GGTRAGILET (181 aa)) enclose the KARI N-terminal Rossmann domain. NADP(+) is bound by residues 25-28 (YGSQ), serine 51, serine 53, and 83-86 (DEVQ). Residue histidine 108 is part of the active site. Residue glycine 134 coordinates NADP(+). The KARI C-terminal knotted domain maps to 183–328 (TFREETETDL…RELRAMFSWL (146 aa)). Aspartate 191, glutamate 195, glutamate 227, and glutamate 231 together coordinate Mg(2+). Position 252 (serine 252) interacts with substrate.

This sequence belongs to the ketol-acid reductoisomerase family. Requires Mg(2+) as cofactor.

It catalyses the reaction (2R)-2,3-dihydroxy-3-methylbutanoate + NADP(+) = (2S)-2-acetolactate + NADPH + H(+). The enzyme catalyses (2R,3R)-2,3-dihydroxy-3-methylpentanoate + NADP(+) = (S)-2-ethyl-2-hydroxy-3-oxobutanoate + NADPH + H(+). It functions in the pathway amino-acid biosynthesis; L-isoleucine biosynthesis; L-isoleucine from 2-oxobutanoate: step 2/4. Its pathway is amino-acid biosynthesis; L-valine biosynthesis; L-valine from pyruvate: step 2/4. Its function is as follows. Involved in the biosynthesis of branched-chain amino acids (BCAA). Catalyzes an alkyl-migration followed by a ketol-acid reduction of (S)-2-acetolactate (S2AL) to yield (R)-2,3-dihydroxy-isovalerate. In the isomerase reaction, S2AL is rearranged via a Mg-dependent methyl migration to produce 3-hydroxy-3-methyl-2-ketobutyrate (HMKB). In the reductase reaction, this 2-ketoacid undergoes a metal-dependent reduction by NADPH to yield (R)-2,3-dihydroxy-isovalerate. This chain is Ketol-acid reductoisomerase (NADP(+)), found in Synechococcus sp. (strain JA-2-3B'a(2-13)) (Cyanobacteria bacterium Yellowstone B-Prime).